A 100-amino-acid polypeptide reads, in one-letter code: Acylphosphatase (100 aa).

In terms of domain architecture, Acylphosphatase-like spans 3 to 92 (RRSYSVIGRV…PLPDTFDIRF (90 aa)). Catalysis depends on residues Arg18 and Asn36. Residues 76–100 (DDPAHEGPLPDTFDIRFRAPGSASE) form a disordered region.

The protein belongs to the acylphosphatase family.

The enzyme catalyses an acyl phosphate + H2O = a carboxylate + phosphate + H(+). This is Acylphosphatase (acyP) from Nitratidesulfovibrio vulgaris (strain ATCC 29579 / DSM 644 / CCUG 34227 / NCIMB 8303 / VKM B-1760 / Hildenborough) (Desulfovibrio vulgaris).